We begin with the raw amino-acid sequence, 342 residues long: D-erythrose-4-phosphate dehydrogenase (342 aa).

11-12 provides a ligand contact to NAD(+); it reads RV. Substrate is bound by residues 153–155, Arg199, 212–213, and Arg235; these read SCT and TK. Cys154 serves as the catalytic Nucleophile. Asn317 is an NAD(+) binding site.

It belongs to the glyceraldehyde-3-phosphate dehydrogenase family. Epd subfamily. Homotetramer.

The protein localises to the cytoplasm. It catalyses the reaction D-erythrose 4-phosphate + NAD(+) + H2O = 4-phospho-D-erythronate + NADH + 2 H(+). It participates in cofactor biosynthesis; pyridoxine 5'-phosphate biosynthesis; pyridoxine 5'-phosphate from D-erythrose 4-phosphate: step 1/5. Its function is as follows. Catalyzes the NAD-dependent conversion of D-erythrose 4-phosphate to 4-phosphoerythronate. In Pseudoalteromonas atlantica (strain T6c / ATCC BAA-1087), this protein is D-erythrose-4-phosphate dehydrogenase.